The following is a 691-amino-acid chain: MEHRAFKWPQPLAGNKPRIWYVGDYNPDQWPEEVWDEDVALMQQAGVNLVSVAIFSWAKLEPEEGVYDFDWLDRVIDKLGKAGIAVDLASGTASPPMWMTQAHPEILWVDYRGDVCQPGARQHWRATSPVFLDYALNLCRKMAEHYKDNPYVVSWHVSNEYGCHNRFDYSEDAERAFQKWCEKKYGTIDAVNDAWGTAFWAQRMNNFSEIIPPRFIGDGNFMNPGKLLDWKRFSSDALLDFYKAERDALLEIAPKPQTTNFMVSAGCTVLDYDKWGHDVDFVSNDHYFSPGEAHFDEMAYAACLTDGIARKNPWFLMEHSTSAVNWRPTNYRLEPGELVRDSLAHLAMGADAICYFQWRQSKAGAEKWHSAMVPHAGPDSQIFRDVCELGADLNKLADEGLLSTKLVKSKVAVVFDYESQWATEHTATPTQEVRHWTEPLDWFRALADNGLTADVVPVRGPWDEYEAVVLPSLAILSEQTTRRVREYVANGGKLFVTYYTGLVDDRDHVWLGGYPGSIRDVVGVRVEEFAPMGTDAPGTMDHLDLDNGTVAHDFADVITSVADTAHVVASFKADKWTGFDGAPAITVNDFGDGKAAYVGARLGREGLAKSLPALLEELGIETSAEDDRGEVVRVERADETGENHFVFLFNRTHDVAVVDVEGEPLVASLAQVNESEHTAAIQPNGVLVVKL.

Residues Arg-121 and Asn-159 each contribute to the substrate site. Residue Glu-160 is the Proton donor of the active site. Residue Glu-318 is the Nucleophile of the active site. Substrate-binding positions include Trp-326 and Glu-366 to His-369.

Belongs to the glycosyl hydrolase 42 family.

The enzyme catalyses Hydrolysis of terminal non-reducing beta-D-galactose residues in beta-D-galactosides.. In terms of biological role, specific for beta-D-anomer-linked galactoside substrates. Hydrolyzes o-nitrophenyl-beta-D-galactopyranoside (ONPG), chromogen 5-bromo-4-chloro-3-indolyl-beta-D-galactopyranoside (X-gal) and to a lesser extent lactose. Hydrolyzes p-nitrophenyl-beta-D-galacturonide very slightly. Does not hydrolyze maltose, sucrose, raffinose or melibiose. Has some transgalactosylation activity yielding galacto-oligosaccharides (GaOS), including O-beta-D-galactopyranosyl-(1,3)-O-beta-D-galactopyranosyl-(1-4)-D-glucopyranose. This chain is Beta-galactosidase III, found in Bifidobacterium longum subsp. infantis.